The following is a 412-amino-acid chain: Phytoene synthase, chloroplastic (412 aa).

The protein belongs to the phytoene/squalene synthase family. As to quaternary structure, monomer. Expressed in roots, leaves, flower buds, sepals, petals, lips and lip crests.

Its subcellular location is the plastid. The protein localises to the chloroplast. It catalyses the reaction 2 (2E,6E,10E)-geranylgeranyl diphosphate = 15-cis-phytoene + 2 diphosphate. It functions in the pathway carotenoid biosynthesis; phytoene biosynthesis; all-trans-phytoene from geranylgeranyl diphosphate: step 1/1. Catalyzes the reaction from prephytoene diphosphate to phytoene. The protein is Phytoene synthase, chloroplastic (PSY) of Oncidium hybrid cultivar (Orchid).